The chain runs to 415 residues: Gamma-glutamyl phosphate reductase (415 aa).

It belongs to the gamma-glutamyl phosphate reductase family.

The protein localises to the cytoplasm. The enzyme catalyses L-glutamate 5-semialdehyde + phosphate + NADP(+) = L-glutamyl 5-phosphate + NADPH + H(+). It participates in amino-acid biosynthesis; L-proline biosynthesis; L-glutamate 5-semialdehyde from L-glutamate: step 2/2. In terms of biological role, catalyzes the NADPH-dependent reduction of L-glutamate 5-phosphate into L-glutamate 5-semialdehyde and phosphate. The product spontaneously undergoes cyclization to form 1-pyrroline-5-carboxylate. The polypeptide is Gamma-glutamyl phosphate reductase (Mycolicibacterium vanbaalenii (strain DSM 7251 / JCM 13017 / BCRC 16820 / KCTC 9966 / NRRL B-24157 / PYR-1) (Mycobacterium vanbaalenii)).